The following is a 487-amino-acid chain: Structure-specific endonuclease subunit SLX1 (487 aa).

Positions 27–109 constitute a GIY-YIG domain; it reads PFYACYLLRS…QKPELSRHLR (83 aa). The tract at residues 44–69 is disordered; the sequence is RTYVGSTPDPPRRIRQHNGELKQGAW. An SLX1-type zinc finger spans residues 262 to 328; sequence CHLCQERIAF…LPYQGLCPNC (67 aa). The segment covering 359–396 has biased composition (basic and acidic residues); it reads KAEKAEKAEKAEKAEKAEKAEKAGRKVRQREMKTKKGD. Disordered stretches follow at residues 359 to 407 and 433 to 475; these read KAEK…QPES and PARS…SEPE. Residues 397 to 407 show a composition bias toward polar residues; that stretch reads QSNGTVAQPES. Residues 438–455 are compositionally biased toward basic and acidic residues; that stretch reads KSKDVGGEGIRHSTHTDD. Residues 465 to 475 are compositionally biased toward acidic residues; the sequence is ETEDESESEPE.

The protein belongs to the SLX1 family. In terms of assembly, forms a heterodimer with SLX4. A divalent metal cation serves as cofactor.

The protein resides in the nucleus. Its function is as follows. Catalytic subunit of the SLX1-SLX4 structure-specific endonuclease that resolves DNA secondary structures generated during DNA repair and recombination. Has endonuclease activity towards branched DNA substrates, introducing single-strand cuts in duplex DNA close to junctions with ss-DNA. The chain is Structure-specific endonuclease subunit SLX1 from Cryptococcus neoformans var. neoformans serotype D (strain B-3501A) (Filobasidiella neoformans).